A 443-amino-acid polypeptide reads, in one-letter code: Mimosinase, chloroplastic (443 aa).

Residues 1–43 constitute a chloroplast transit peptide; it reads MALSSTFLNPLVSSVAVNPQPKITSGKGFRVNCLIRTQQTVIK. Pyridoxal 5'-phosphate contacts are provided by Y105, R107, G135, M136, S254, and T256. K257 is modified (N6-(pyridoxal phosphate)lysine).

The protein belongs to the trans-sulfuration enzymes family. Forms homodimers. May form homotetramers from two homodimers. It depends on pyridoxal 5'-phosphate as a cofactor.

It is found in the plastid. It localises to the chloroplast. It carries out the reaction L-mimosine + H2O = 3-hydroxy-4H-pyrid-4-one + pyruvate + NH4(+). In terms of biological role, catalyzes the degradation of mimosine, which is a toxic secondary metabolite found in all Leucaena and Mimosa species. The polypeptide is Mimosinase, chloroplastic (Leucaena leucocephala (White popinac)).